We begin with the raw amino-acid sequence, 407 residues long: Aminomethyltransferase, mitochondrial (407 aa).

Residues 1-29 (MRGGLWQVGQSITRRLGQSDKKTIVRRWY) constitute a mitochondrion transit peptide. Substrate-binding residues include Glu234, Arg265, and Tyr403.

Belongs to the GcvT family. In terms of assembly, the glycine cleavage system is composed of four proteins: P, T, L and H.

Its subcellular location is the mitochondrion. It carries out the reaction N(6)-[(R)-S(8)-aminomethyldihydrolipoyl]-L-lysyl-[protein] + (6S)-5,6,7,8-tetrahydrofolate = N(6)-[(R)-dihydrolipoyl]-L-lysyl-[protein] + (6R)-5,10-methylene-5,6,7,8-tetrahydrofolate + NH4(+). The glycine cleavage system catalyzes the degradation of glycine. This chain is Aminomethyltransferase, mitochondrial (GDCST), found in Flaveria trinervia (Clustered yellowtops).